Reading from the N-terminus, the 103-residue chain is Cobalt transport protein CbiN (103 aa).

2 helical membrane passes run 6 to 26 (VLTN…PFFV) and 68 to 88 (LLFA…LGYL).

Belongs to the CbiN family. As to quaternary structure, forms an energy-coupling factor (ECF) transporter complex composed of an ATP-binding protein (A component, CbiO), a transmembrane protein (T component, CbiQ) and 2 possible substrate-capture proteins (S components, CbiM and CbiN) of unknown stoichimetry.

It localises to the cell membrane. Its pathway is cofactor biosynthesis; adenosylcobalamin biosynthesis. In terms of biological role, part of the energy-coupling factor (ECF) transporter complex CbiMNOQ involved in cobalt import. This chain is Cobalt transport protein CbiN, found in Clostridium perfringens (strain 13 / Type A).